Consider the following 274-residue polypeptide: NAD kinase (274 aa).

The active-site Proton acceptor is Asp-60. NAD(+) contacts are provided by residues 60–61 (DG), Lys-65, 127–128 (NE), and Arg-152.

It belongs to the NAD kinase family. A divalent metal cation serves as cofactor.

Its subcellular location is the cytoplasm. The catalysed reaction is NAD(+) + ATP = ADP + NADP(+) + H(+). Functionally, involved in the regulation of the intracellular balance of NAD and NADP, and is a key enzyme in the biosynthesis of NADP. Catalyzes specifically the phosphorylation on 2'-hydroxyl of the adenosine moiety of NAD to yield NADP. This chain is NAD kinase, found in Mycoplasmoides gallisepticum (strain R(low / passage 15 / clone 2)) (Mycoplasma gallisepticum).